We begin with the raw amino-acid sequence, 387 residues long: Cytochrome b (387 aa).

A run of 8 helical transmembrane segments spans residues 32–52 (FGFF…LLAM), 76–98 (WLLR…VHML), 113–133 (LWVS…LGYV), 179–199 (FFSL…LHII), 225–245 (FTIK…AFVF), 290–310 (LGVL…FLTI), 325–345 (LFWS…QPAA), and 353–373 (LYST…IYMV). Positions 82 and 96 each coordinate heme b. 2 residues coordinate heme b: histidine 183 and histidine 197.

This sequence belongs to the cytochrome b family. In terms of assembly, the main subunits of complex b-c1 are: cytochrome b, cytochrome c1 and the Rieske protein. Requires heme b as cofactor.

Its subcellular location is the mitochondrion inner membrane. In terms of biological role, component of the ubiquinol-cytochrome c reductase complex (complex III or cytochrome b-c1 complex) that is part of the mitochondrial respiratory chain. The b-c1 complex mediates electron transfer from ubiquinol to cytochrome c. Contributes to the generation of a proton gradient across the mitochondrial membrane that is then used for ATP synthesis. In Dictyostelium citrinum (Slime mold), this protein is Cytochrome b (cytB).